The sequence spans 664 residues: UvrABC system protein B (664 aa).

One can recognise a Helicase ATP-binding domain in the interval 23–180 (EGLNRGMRFQ…ERLARIGYQR (158 aa)). 36–43 (GVTGSGKT) provides a ligand contact to ATP. The short motif at 89 to 112 (YYDYYQPEAYIPTKDLYIEKNADI) is the Beta-hairpin element. In terms of domain architecture, Helicase C-terminal spans 429-588 (DLVNEIVKVK…ITPRSVIKPL (160 aa)). The UVR domain maps to 622–657 (EEYMAVLEEEMYRAASELRYEDAAALRDELFRIREE).

This sequence belongs to the UvrB family. In terms of assembly, forms a heterotetramer with UvrA during the search for lesions. Interacts with UvrC in an incision complex.

The protein resides in the cytoplasm. Its function is as follows. The UvrABC repair system catalyzes the recognition and processing of DNA lesions. A damage recognition complex composed of 2 UvrA and 2 UvrB subunits scans DNA for abnormalities. Upon binding of the UvrA(2)B(2) complex to a putative damaged site, the DNA wraps around one UvrB monomer. DNA wrap is dependent on ATP binding by UvrB and probably causes local melting of the DNA helix, facilitating insertion of UvrB beta-hairpin between the DNA strands. Then UvrB probes one DNA strand for the presence of a lesion. If a lesion is found the UvrA subunits dissociate and the UvrB-DNA preincision complex is formed. This complex is subsequently bound by UvrC and the second UvrB is released. If no lesion is found, the DNA wraps around the other UvrB subunit that will check the other stand for damage. The protein is UvrABC system protein B of Thermotoga petrophila (strain ATCC BAA-488 / DSM 13995 / JCM 10881 / RKU-1).